Reading from the N-terminus, the 306-residue chain is Type 3 secretion system translocon protein SctB (306 aa).

A helical membrane pass occupies residues leucine 128 to alanine 152.

The protein belongs to the SctB/YopD family. The core secretion machinery of the T3SS is composed of approximately 20 different proteins, including cytoplasmic components, a base, an export apparatus and a needle. This subunit is involved in the formation of a pore, called the translocon, in host membrane. Interacts with YopB/SctE and YopE. Together with YopB/SctE, forms a multimeric integral membrane complex with a mass of between 500 and 700 kDa. Interacts with its cognate chaperone SycD.

It localises to the secreted. The protein resides in the host membrane. Functionally, component of the type III secretion system (T3SS), also called injectisome, which is used to inject bacterial effector proteins into eukaryotic host cells. YopB/SctE and YopD/SctB are inserted into the host membrane where they form a pore and allow the translocation of effector proteins into the cytosol of target cells. In terms of biological role, involved in pathogenesis. Essential for the establishment of Yersinia infections in a mouse model system, but not for the targeting of effector Yops. May modulate the host's immune response at a distance from the site of infection. In Yersinia enterocolitica, this protein is Type 3 secretion system translocon protein SctB.